Reading from the N-terminus, the 136-residue chain is Cell wall synthesis protein CwsA (136 aa).

The helical transmembrane segment at 94–114 threads the bilayer; sequence LLIAAVAVTVLGGGAAAFSIV.

It belongs to the CwsA family. As to quaternary structure, interacts with CrgA and Wag31.

It is found in the cell membrane. In terms of biological role, required for regulated cell division, cell wall synthesis and the maintenance of cell shape. In Mycolicibacterium smegmatis (strain ATCC 700084 / mc(2)155) (Mycobacterium smegmatis), this protein is Cell wall synthesis protein CwsA.